The chain runs to 221 residues: Ribosomal RNA small subunit methyltransferase Nep1 (221 aa).

S-adenosyl-L-methionine-binding positions include Gly174, Gly179, and 196 to 201 (IGNVSL).

Belongs to the class IV-like SAM-binding methyltransferase superfamily. RNA methyltransferase NEP1 family. Homodimer.

It catalyses the reaction a pseudouridine in rRNA + S-adenosyl-L-methionine = an N(1)-methylpseudouridine in rRNA + S-adenosyl-L-homocysteine + H(+). Its function is as follows. Methyltransferase involved in ribosomal biogenesis. Specifically catalyzes the N1-methylation of the pseudouridine corresponding to position 914 in M.jannaschii 16S rRNA. This Pyrobaculum calidifontis (strain DSM 21063 / JCM 11548 / VA1) protein is Ribosomal RNA small subunit methyltransferase Nep1.